The primary structure comprises 187 residues: NADH-quinone oxidoreductase subunit B (187 aa).

[4Fe-4S] cluster-binding residues include Cys-66, Cys-67, Cys-131, and Cys-161.

It belongs to the complex I 20 kDa subunit family. In terms of assembly, NDH-1 is composed of 14 different subunits. Subunits NuoB, C, D, E, F, and G constitute the peripheral sector of the complex. The cofactor is [4Fe-4S] cluster.

It localises to the cell inner membrane. It carries out the reaction a quinone + NADH + 5 H(+)(in) = a quinol + NAD(+) + 4 H(+)(out). Its function is as follows. NDH-1 shuttles electrons from NADH, via FMN and iron-sulfur (Fe-S) centers, to quinones in the respiratory chain. The immediate electron acceptor for the enzyme in this species is believed to be ubiquinone. Couples the redox reaction to proton translocation (for every two electrons transferred, four hydrogen ions are translocated across the cytoplasmic membrane), and thus conserves the redox energy in a proton gradient. The sequence is that of NADH-quinone oxidoreductase subunit B from Methylocella silvestris (strain DSM 15510 / CIP 108128 / LMG 27833 / NCIMB 13906 / BL2).